A 400-amino-acid chain; its full sequence is tRNA-specific adenosine deaminase TAD3 (400 aa).

The region spanning 250 to 385 (SQWHPLRHAS…KSLNHHYAVF (136 aa)) is the CMP/dCMP-type deaminase domain. His257 is a binding site for Zn(2+). Residues 273–320 (LFPNPSKIFDQDHVPPSNTDSPAKKQKTSSQSPDVQNDSREETVRDPS) form a disordered region. A compositionally biased stretch (basic and acidic residues) spans 309 to 320 (NDSREETVRDPS). Cys339 and Cys342 together coordinate Zn(2+).

The protein belongs to the cytidine and deoxycytidylate deaminase family. ADAT3 subfamily. As to quaternary structure, interacts with TAD2.

The protein localises to the nucleus. It localises to the cytoplasm. It catalyses the reaction adenosine(34) in tRNA + H2O + H(+) = inosine(34) in tRNA + NH4(+). Its function is as follows. Involved in RNA editing. Catalyzes the specific deamination of adenosine-34 in several cytosolic tRNA species. Generates inosine at the wobble position of the anticodon loop. The polypeptide is tRNA-specific adenosine deaminase TAD3 (Arabidopsis thaliana (Mouse-ear cress)).